A 364-amino-acid polypeptide reads, in one-letter code: TD and POZ domain-containing protein 2 (364 aa).

The region spanning 19 to 149 (EFCYEWTISN…KDKLTLCCKV (131 aa)) is the MATH domain. The BTB domain occupies 188 to 255 (TDCSLLVAGH…IYTGKAPTLH (68 aa)).

It belongs to the Tdpoz family.

The sequence is that of TD and POZ domain-containing protein 2 from Mus musculus (Mouse).